A 141-amino-acid chain; its full sequence is Hemoglobin subunit beta (141 aa).

The region spanning 2 to 141 (HWSEVELHEI…VVDAISKEYH (140 aa)) is the Globin domain. Heme b contacts are provided by His-58 and His-87.

The protein belongs to the globin family. In terms of assembly, heterotetramer of two alpha chains and two beta chains. In terms of tissue distribution, red blood cells.

In terms of biological role, involved in oxygen transport from the lung to the various peripheral tissues. This is Hemoglobin subunit beta (HBB) from Heterodontus portusjacksoni (Port Jackson shark).